Here is a 93-residue protein sequence, read N- to C-terminus: Large ribosomal subunit protein uL23cz/uL23cy (93 aa).

The protein belongs to the universal ribosomal protein uL23 family. Part of the 50S ribosomal subunit.

The protein resides in the plastid. Its subcellular location is the chloroplast. Its function is as follows. Binds to 23S rRNA. This chain is Large ribosomal subunit protein uL23cz/uL23cy (rpl23-A), found in Jasminum nudiflorum (Winter jasmine).